We begin with the raw amino-acid sequence, 299 residues long: Probable lipid kinase YegS (299 aa).

Residues 2–133 (AEFPASLLIL…IDMAQVNKQT (132 aa)) enclose the DAGKc domain. Residues T40, 66 to 72 (GDGTINE), and T95 contribute to the ATP site. Mg(2+) is bound by residues L215, D218, and L220. The active-site Proton acceptor is E271.

This sequence belongs to the diacylglycerol/lipid kinase family. YegS lipid kinase subfamily. The cofactor is Mg(2+). It depends on Ca(2+) as a cofactor.

The protein resides in the cytoplasm. Functionally, probably phosphorylates lipids; the in vivo substrate is unknown. The polypeptide is Probable lipid kinase YegS (Shigella flexneri).